The following is a 162-amino-acid chain: Caveolin-2 (162 aa).

The Cytoplasmic segment spans residues 1-86 (MGLETEKADV…FEISKYVMYK (86 aa)). Position 19 is a phosphotyrosine; by SRC (Tyr-19). Residues Ser-20 and Ser-23 each carry the phosphoserine modification. Tyr-27 carries the phosphotyrosine; by SRC modification. Ser-36 is subject to Phosphoserine. Positions 87–107 (FLTVFLAIPLAFIAGILFATL) form an intramembrane region, helical. Over 108 to 162 (SCLHIWILMPFVKTCLMVLPSVQTIWKSVTDVIIAPLCTSVGRCFSSVSLQLSQD) the chain is Cytoplasmic.

This sequence belongs to the caveolin family. Monomer or homodimer. Interacts with CAV1; the interaction forms a stable heterooligomeric complex that is required for targeting to lipid rafts and for caveolae formation. Tyrosine phosphorylated forms do not form heterooligomers with the Tyr-19-phosphorylated form existing as a monomer or dimer, and the Tyr-27-form as a monomer only. Interacts (tyrosine phosphorylated form) with the SH2 domain-containing proteins, RASA1, NCK1 and SRC. Interacts (tyrosine phosphorylated form) with INSR, the interaction (Tyr-27-phosphorylated form) is increased on insulin stimulation. Interacts (Tyr-19 phosphorylated form) with MAPK1 (phosphorylated form); the interaction, promoted by insulin, leads to nuclear location and MAPK1 activation. Interacts with STAT3; the interaction is increased on insulin-induced tyrosine phosphorylation leading to STAT activation. Post-translationally, phosphorylated on serine and tyrosine residues. CAV1 promotes phosphorylation on Ser-23 which then targets the complex to the plasma membrane, lipid rafts and caveolae. Phosphorylation on Ser-36 appears to modulate mitosis in endothelial cells. Phosphorylation on both Tyr-19 and Tyr-27 is required for insulin-induced 'Ser-727' phosphorylation of STAT3 and its activation. Phosphorylation on Tyr-19 is required for insulin-induced phosphorylation of MAPK1 and DNA binding of STAT3. Tyrosine phosphorylation is induced by both EGF and insulin (By. similarity).

The protein resides in the nucleus. It localises to the cytoplasm. Its subcellular location is the golgi apparatus membrane. It is found in the cell membrane. The protein localises to the membrane. The protein resides in the caveola. In terms of biological role, may act as a scaffolding protein within caveolar membranes. Interacts directly with G-protein alpha subunits and can functionally regulate their activity. Acts as an accessory protein in conjunction with CAV1 in targeting to lipid rafts and driving caveolae formation. The Ser-36 phosphorylated form has a role in modulating mitosis in endothelial cells. Positive regulator of cellular mitogenesis of the MAPK signaling pathway. Required for the insulin-stimulated nuclear translocation and activation of MAPK1 and STAT3, and the subsequent regulation of cell cycle progression. The polypeptide is Caveolin-2 (CAV2) (Pan troglodytes (Chimpanzee)).